A 283-amino-acid chain; its full sequence is Putative casein kinase II subunit beta-4 (283 aa).

Disordered regions lie at residues 1–23 (MYKD…EILG) and 35–92 (LDKH…SEGD). Residues 7–16 (GGGIMGGGGS) show a composition bias toward gly residues. Residues 58-70 (VPSTSTAKSQLHS) are compositionally biased toward polar residues.

It belongs to the casein kinase 2 subunit beta family. As to quaternary structure, heterotetramer of two catalytic alpha subunits and two regulatory beta subunits. In terms of processing, phosphorylated by alpha subunit.

It localises to the cytoplasm. It is found in the cytosol. Its function is as follows. Plays a complex role in regulating the basal catalytic activity of the alpha subunit. The tetrameric holoenzyme CK2, composed of two alpha and two beta subunits, phosphorylates the transcription factor PIF1 after an exposure to light, resulting in a proteasome-dependent degradation of PIF1 and promotion of photomorphogenesis. CK2 phosphorylates translation initiation factors. May participate in the regulation of the initiation of translation. This is Putative casein kinase II subunit beta-4 from Arabidopsis thaliana (Mouse-ear cress).